A 452-amino-acid polypeptide reads, in one-letter code: Imaginal disk growth factor 6 (452 aa).

The N-terminal stretch at 1 to 18 (MIIKALAIVSLCLASIQA) is a signal peptide. One can recognise a GH18 domain in the interval 29–452 (KHLVCYYDSA…LRAIKYRLTN (424 aa)). Cys33 and Cys60 form a disulfide bridge. A glycan (N-linked (GlcNAc...) asparagine) is linked at Asn233. The cysteines at positions 352 and 435 are disulfide-linked.

It belongs to the glycosyl hydrolase 18 family. IDGF subfamily. Post-translationally, glycosylated. In terms of tissue distribution, in larvae, it is expressed in the fat body and by hemocytes.

It is found in the secreted. Probably required to stimulate the proliferation, polarization and motility of imaginal disk cells. May act by stabilizing the binding of insulin-like peptides to its receptor through a simultaneous interaction with both molecules to form a multiprotein signaling complex. This Drosophila melanogaster (Fruit fly) protein is Imaginal disk growth factor 6.